The chain runs to 824 residues: Probable ion channel POLLUX (824 aa).

Residues 45–54 show a composition bias toward low complexity; sequence DGDDSSNLPT. The segment at 45–70 is disordered; sequence DGDDSSNLPTVPNPEEKPVPVPSQSP. Transmembrane regions (helical) follow at residues 81-101, 135-155, 198-218, and 250-270; these read FSLTHCLKFICSCSFTYVMFL, AVVFFSVIITFVLPFLLYMYL, LALLLATVVLIVYGGLALYAV, and IVSVAISAGGMLIFATMLGLI. RCK N-terminal domains follow at residues 291–432 and 550–699; these read SNHI…ETVV and PEKI…DKSI. The stretch at 325 to 346 forms a coiled coil; that stretch reads LAERDKEEMETDIAKFEFDLMG.

Belongs to the castor/pollux (TC 1.A.1.23) family.

The protein localises to the nucleus membrane. The chain is Probable ion channel POLLUX from Arabidopsis thaliana (Mouse-ear cress).